A 361-amino-acid polypeptide reads, in one-letter code: Protein SGT1 homolog (361 aa).

3 TPR repeats span residues 3–36 (ASDL…GPAT), 37–70 (ADLY…DPTM), and 71–104 (HKAY…APGD). Residue Thr-150 is modified to Phosphothreonine. Residues 159 to 248 (KPKYRHDYYN…AEQVTWTTLD (90 aa)) form the CS domain. Residues 255 to 295 (AIPQKISTPAETAPRPSYPSSKSKKDWDKLEAEVKKEEKEE) are disordered. At Thr-262 the chain carries Phosphothreonine. Positions 271–361 (SYPSSKSKKD…DGMELKKWEI (91 aa)) constitute an SGS domain. Basic and acidic residues predominate over residues 277–295 (SKKDWDKLEAEVKKEEKEE).

This sequence belongs to the SGT1 family. In terms of processing, constitutively phosphorylated at Thr-262 and phosphorylated at Thr-150 upon infection with the fungal pathogen Ustilago maydis.

It localises to the cytoplasm. It is found in the nucleus. Functionally, may act as positive regulator of basal defense. May be involved in basal disease resistance to the fungal pathogen Ustilago maydis. This Zea mays (Maize) protein is Protein SGT1 homolog.